The primary structure comprises 188 residues: Ribosome-recycling factor (188 aa).

This sequence belongs to the RRF family.

Its subcellular location is the cytoplasm. In terms of biological role, responsible for the release of ribosomes from messenger RNA at the termination of protein biosynthesis. May increase the efficiency of translation by recycling ribosomes from one round of translation to another. In Granulibacter bethesdensis (strain ATCC BAA-1260 / CGDNIH1), this protein is Ribosome-recycling factor.